A 388-amino-acid polypeptide reads, in one-letter code: Succinate--CoA ligase [ADP-forming] subunit beta (388 aa).

ATP-binding positions include Lys46, 53 to 55 (GRG), Glu99, Cys102, and Glu107. The Mg(2+) site is built by Asn199 and Asp213. Substrate contacts are provided by residues Asn264 and 321 to 323 (GIV).

It belongs to the succinate/malate CoA ligase beta subunit family. In terms of assembly, heterotetramer of two alpha and two beta subunits. Requires Mg(2+) as cofactor.

It catalyses the reaction succinate + ATP + CoA = succinyl-CoA + ADP + phosphate. The catalysed reaction is GTP + succinate + CoA = succinyl-CoA + GDP + phosphate. Its pathway is carbohydrate metabolism; tricarboxylic acid cycle; succinate from succinyl-CoA (ligase route): step 1/1. In terms of biological role, succinyl-CoA synthetase functions in the citric acid cycle (TCA), coupling the hydrolysis of succinyl-CoA to the synthesis of either ATP or GTP and thus represents the only step of substrate-level phosphorylation in the TCA. The beta subunit provides nucleotide specificity of the enzyme and binds the substrate succinate, while the binding sites for coenzyme A and phosphate are found in the alpha subunit. The protein is Succinate--CoA ligase [ADP-forming] subunit beta of Actinobacillus pleuropneumoniae serotype 5b (strain L20).